The sequence spans 108 residues: Bublin coiled-coil protein (108 aa).

Disordered stretches follow at residues 1 to 23 (MSGP…DDDF) and 67 to 108 (RLEF…DEGS). The stretch at 25 to 73 (SEEYEAINSMLDQINSYLDDLEERNDSLNGKLHELMESNRQARLEFRAQ) forms a coiled coil. Over residues 99–108 (ENDKKIDEGS) the composition is skewed to basic and acidic residues.

Belongs to the UPF0184 (EST00098) family.

It localises to the cell junction. The protein resides in the cytoplasm. The protein localises to the cytoskeleton. Functionally, essential for intermediate filament organization in intestinal cells, interacts with intermediate filament and regulates intestinal lumen morphology. In Takifugu rubripes (Japanese pufferfish), this protein is Bublin coiled-coil protein (bbln).